The sequence spans 1050 residues: MDS1 and EVI1 complex locus protein EVI1-B (1050 aa).

3 C2H2-type zinc fingers span residues 21-48, 75-97, and 103-125; these read YHCEECDQLFESKTELSNHQKYSCGTPH, HECKECDQVFPDMQSLEKHLLSH, and YKCDQCPKAFNWKSNLIRHQMSH. A C2H2-type 4; degenerate zinc finger spans residues 131–155; the sequence is YECENCSKQVFTDPSNLQRHIRSQH. 2 consecutive C2H2-type zinc fingers follow at residues 161–183 and 189–211; these read HACSECGKTFATSSGLKQHKHIH and FVCEVCHKSYTQFSNLCRHKRMH. Residues 218–240 form a C2H2-type 7; atypical zinc finger; it reads IKCKDCGQMFSTTSSLNKHRRFC. Disordered regions lie at residues 371-421 and 529-612; these read ITEN…SDKD and PLKV…EKKD. Residues 379-390 are compositionally biased toward basic and acidic residues; that stretch reads RPHEKVSDHSES. Over residues 397 to 411 the composition is skewed to polar residues; that stretch reads STPSGSDLETTSGSD. Positions 420–433 match the Nuclear localization signal motif; the sequence is KDKLKENGKLYKDK. Basic and acidic residues predominate over residues 529-542; sequence PLKVEPESPKESKK. A CTBP-binding motif 1 motif is present at residues 551-555; sequence AFDLT. The segment covering 564–576 has biased composition (low complexity); sequence SPNAPSKSSAPTS. A CTBP-binding motif 2 motif is present at residues 582–586; that stretch reads PLDLS. Positions 588–598 are enriched in polar residues; it reads GSRSRATTTKQ. Residues 599–612 show a composition bias toward basic and acidic residues; it reads TESRKNHIFGEKKD. 3 C2H2-type zinc fingers span residues 731–753, 759–782, and 788–810; these read YTCRYCGKIFPRSANLTRHLRTH, YRCKYCDRSFSISSNLQRHIRNIH, and FKCHLCDRCFGQQTNLDRHLKKH. The segment at 928–951 is disordered; the sequence is KSEVNCKVSPSRHDDDDDDEEEDF.

In terms of assembly, homooligomer. Interacts with ctbp.

It is found in the nucleus. Its subcellular location is the nucleus speckle. Transcriptional repressor during pronephros development. Plays a role in regionalization of the pronephros; may promote formation of the distal tubule and duct over formation of the glomus and proximal tubule. The sequence is that of MDS1 and EVI1 complex locus protein EVI1-B (mecom-b) from Xenopus laevis (African clawed frog).